The primary structure comprises 505 residues: Glycerol kinase (505 aa).

An ADP-binding site is contributed by T14. The ATP site is built by T14, T15, and S16. T14 contacts sn-glycerol 3-phosphate. Position 18 (R18) interacts with ADP. Sn-glycerol 3-phosphate is bound by residues R84, E85, Y136, and D246. Residues R84, E85, Y136, D246, and Q247 each contribute to the glycerol site. Residues T268 and G311 each contribute to the ADP site. The ATP site is built by T268, G311, Q315, and G412. Positions 412 and 416 each coordinate ADP.

Belongs to the FGGY kinase family.

The catalysed reaction is glycerol + ATP = sn-glycerol 3-phosphate + ADP + H(+). Its pathway is polyol metabolism; glycerol degradation via glycerol kinase pathway; sn-glycerol 3-phosphate from glycerol: step 1/1. Its activity is regulated as follows. Inhibited by fructose 1,6-bisphosphate (FBP). Key enzyme in the regulation of glycerol uptake and metabolism. Catalyzes the phosphorylation of glycerol to yield sn-glycerol 3-phosphate. This is Glycerol kinase from Vibrio vulnificus (strain CMCP6).